The primary structure comprises 453 residues: Nuclear distribution protein nudF-2 (453 aa).

The LisH domain occupies 9-41 (QADELHRALIAYLTAANLPNTAAALREELNLSE). Residues 62–88 (SVVRLQKKIMDLESRNHILQSELDNAT) are a coiled coil. A disordered region spans residues 84 to 107 (LDNATPTSRQNKDPVAWLPRAPPR). WD repeat units lie at residues 112–153 (SHRD…RTIK), 155–195 (HTKA…KNIR), 199–239 (GHDH…CVKT), 242–281 (GHAE…PEPK), 286–345 (GHEH…IKTL), 347–386 (GHDN…KCVK), and 391–449 (AHGH…LNVR).

It belongs to the WD repeat LIS1/nudF family. As to quaternary structure, self-associates. Interacts with ro-11/nde1 and dynein.

Its subcellular location is the cytoplasm. It is found in the cytoskeleton. The protein localises to the spindle pole. Its function is as follows. Positively regulates the activity of the minus-end directed microtubule motor protein dynein. May enhance dynein-mediated microtubule sliding by targeting dynein to the microtubule plus end. Required for nuclear migration during vegetative growth as well as development. Required for retrograde early endosome (EE) transport from the hyphal tip. Required for localization of dynein to the mitotic spindle poles. Recruits additional proteins to the dynein complex at SPBs. This chain is Nuclear distribution protein nudF-2 (nmp-1), found in Neurospora crassa (strain ATCC 24698 / 74-OR23-1A / CBS 708.71 / DSM 1257 / FGSC 987).